We begin with the raw amino-acid sequence, 573 residues long: L-lactate dehydrogenase (cytochrome) (573 aa).

The transit peptide at 1-73 (MFKSQLRTAT…LYQKDKFISA (73 aa)) directs the protein to the mitochondrion. The Cytochrome b5 heme-binding domain maps to 80–157 (DIELTPEIVS…PPEKHLGPLV (78 aa)). Residues His115, His138, and Tyr208 each contribute to the heme b site. An FMN hydroxy acid dehydrogenase domain is found at 182-542 (PPLSQMINLH…TPELLDTRSI (361 aa)). Tyr208 lines the pyruvate pocket. FMN is bound by residues 260–263 (SATA), Ser290, and Gln313. Tyr315 provides a ligand contact to pyruvate. Position 341 (Thr341) interacts with FMN. A heme b-binding site is contributed by Lys357. Residue Lys408 participates in FMN binding. His432 and Arg435 together coordinate pyruvate. FMN contacts are provided by residues 468–472 (DGGVR) and 491–492 (GR).

The protein in the N-terminal section; belongs to the cytochrome b5 family. In the C-terminal section; belongs to the FMN-dependent alpha-hydroxy acid dehydrogenase family. As to quaternary structure, homotetramer. FMN serves as cofactor. The cofactor is heme b.

The protein resides in the mitochondrion intermembrane space. The catalysed reaction is (S)-lactate + 2 Fe(III)-[cytochrome c] = 2 Fe(II)-[cytochrome c] + pyruvate + 2 H(+). Functionally, catalyzes the oxidation of (S)-lactate (L-lactate) to pyruvate with subsequent transfer of electrons to cytochrome c. Is involved in the utilization of (S)-lactate as a sole source of carbon for growth. The sequence is that of L-lactate dehydrogenase (cytochrome) (CYB2) from Wickerhamomyces anomalus (Yeast).